A 252-amino-acid chain; its full sequence is Triosephosphate isomerase (252 aa).

Position 11–13 (11–13 (NWK)) interacts with substrate. The Electrophile role is filled by His-97. Glu-169 functions as the Proton acceptor in the catalytic mechanism. Residues Gly-175, Ser-215, and 236-237 (GG) each bind substrate.

The protein belongs to the triosephosphate isomerase family. Homodimer.

Its subcellular location is the cytoplasm. It carries out the reaction D-glyceraldehyde 3-phosphate = dihydroxyacetone phosphate. Its pathway is carbohydrate biosynthesis; gluconeogenesis. The protein operates within carbohydrate degradation; glycolysis; D-glyceraldehyde 3-phosphate from glycerone phosphate: step 1/1. In terms of biological role, involved in the gluconeogenesis. Catalyzes stereospecifically the conversion of dihydroxyacetone phosphate (DHAP) to D-glyceraldehyde-3-phosphate (G3P). This Mycoplasmoides gallisepticum (strain R(low / passage 15 / clone 2)) (Mycoplasma gallisepticum) protein is Triosephosphate isomerase.